Reading from the N-terminus, the 207-residue chain is MKSKKKGKNLWRDHYTDKAQKAGFPARSVFKLEEMQKRWKILRPGQKVLDLGCAPGSWLKYASQIVGDSGRVIGLDLKPMDQPDKPNAQFIQGDAFELTQEFLDEIGRDFDVVLSDMAPNTTGIKNVDALKSAALCESALAAAVTVLKPGGSFVCKIFQGEGFDAFIKDVKKYFTKHKIFKPESTRKQSREIYVVGWSKKGGSHVRT.

5 residues coordinate S-adenosyl-L-methionine: G56, W58, D76, D94, and D116. The active-site Proton acceptor is K156.

Belongs to the class I-like SAM-binding methyltransferase superfamily. RNA methyltransferase RlmE family.

Its subcellular location is the cytoplasm. It carries out the reaction uridine(2552) in 23S rRNA + S-adenosyl-L-methionine = 2'-O-methyluridine(2552) in 23S rRNA + S-adenosyl-L-homocysteine + H(+). In terms of biological role, specifically methylates the uridine in position 2552 of 23S rRNA at the 2'-O position of the ribose in the fully assembled 50S ribosomal subunit. In Desulfatibacillum aliphaticivorans, this protein is Ribosomal RNA large subunit methyltransferase E.